Reading from the N-terminus, the 1077-residue chain is Semaphorin-5A (1077 aa).

Positions 1-21 (MKGACILAWLFSSLGVWRLAR) are cleaved as a signal peptide. At 22–971 (PETQDPAKCQ…RCGEFNMFHM (950 aa)) the chain is on the extracellular side. Residues 35 to 484 (HPVVSYKEIG…LQEHVAKIPL (450 aa)) enclose the Sema domain. 2 disulfide bridges follow: C104/C114 and C131/C140. Residues N147, N168, N227, and N277 are each glycosylated (N-linked (GlcNAc...) asparagine). 2 cysteine pairs are disulfide-bonded: C254–C357 and C278–C320. N323 and N367 each carry an N-linked (GlcNAc...) asparagine glycan. Intrachain disulfides connect C487/C504 and C496/C513. N536 and N591 each carry an N-linked (GlcNAc...) asparagine glycan. TSP type-1 domains lie at 540-593 (DGSF…TNCS), 595-651 (NGGW…LLCP), 653-702 (HVFW…NACP), 707-765 (TTPW…GCST), 784-839 (NGAW…LPCP), 841-896 (DGVW…QTCP), and 897-944 (ESWS…VFDS). 6 cysteine pairs are disulfide-bonded: C607–C644, C611–C650, C622–C634, C665–C696, C669–C701, and C680–C686. Residue N717 is glycosylated (N-linked (GlcNAc...) asparagine). Intrachain disulfides connect C796–C833, C800–C838, C811–C823, C853–C890, C857–C895, and C868–C880. N-linked (GlcNAc...) asparagine glycosylation is present at N933. Residues 972–992 (FHMMAVGLSSSILGCLLTLLV) form a helical membrane-spanning segment. At 993 to 1077 (YTYCQRYQQQ…FTDLNNYDEY (85 aa)) the chain is on the cytoplasmic side.

Belongs to the semaphorin family. As to quaternary structure, binds PLXNB3. As to expression, in adult, detected in liver, brain, kidney, heart, lung and spleen.

It is found in the membrane. Functionally, bifunctional axonal guidance cue regulated by sulfated proteoglycans; attractive effects result from interactions with heparan sulfate proteoglycans (HSPGs), while the inhibitory effects depend on interactions with chondroitin sulfate proteoglycans (CSPGs). Ligand for receptor PLXNB3. In glioma cells, SEMA5A stimulation of PLXNB3 results in the disassembly of F-actin stress fibers, disruption of focal adhesions and cellular collapse as well as inhibition of cell migration and invasion through ARHGDIA-mediated inactivation of RAC1. May promote angiogenesis by increasing endothelial cell proliferation and migration and inhibiting apoptosis. In Mus musculus (Mouse), this protein is Semaphorin-5A (Sema5a).